Here is a 712-residue protein sequence, read N- to C-terminus: Patatin-like phospholipase domain-containing protein ACLA_029670 (712 aa).

Over residues 1-10 (MTSAEKSATR) the composition is skewed to polar residues. Residues 1–20 (MTSAEKSATRNIYDPSALPD) form a disordered region. Residues 85–105 (WPFLFIVFAWITVLGIAYALT) traverse the membrane as a helical segment. Residues 275–466 (LCLSGGATFA…RTDIPIKALN (192 aa)) form the PNPLA domain. The GXSXG signature appears at 306 to 310 (GTSGG). The active-site Nucleophile is serine 308. Aspartate 453 (proton acceptor) is an active-site residue. Positions 649–664 (FPERHSDYKDESHYTE) are enriched in basic and acidic residues. The interval 649 to 686 (FPERHSDYKDESHYTEVSDSLSTNSSRPHTPDARRGSI) is disordered. Residues 665–676 (VSDSLSTNSSRP) show a composition bias toward polar residues. Positions 677-686 (HTPDARRGSI) are enriched in basic and acidic residues.

The protein belongs to the PLPL family.

The protein localises to the membrane. Probable lipid hydrolase. This chain is Patatin-like phospholipase domain-containing protein ACLA_029670, found in Aspergillus clavatus (strain ATCC 1007 / CBS 513.65 / DSM 816 / NCTC 3887 / NRRL 1 / QM 1276 / 107).